The following is a 179-amino-acid chain: MSRTGKKPISLPEKVDVKFEGLSITVKGPKGELKRTLPNGVSLSKDENFIFVKPINEKRQSREMHGLCRSLVANMVEGVSNGFTKKLEIVGVGSRAQVKGKTLVVSAGYSHPVEVVPPEGITFKVENNTNVIVTGPDKELVGNEAAKIRAIRPPEPYKGKGIKYQGELIIRKAGKSGKT.

Belongs to the universal ribosomal protein uL6 family. In terms of assembly, part of the 50S ribosomal subunit.

This protein binds to the 23S rRNA, and is important in its secondary structure. It is located near the subunit interface in the base of the L7/L12 stalk, and near the tRNA binding site of the peptidyltransferase center. The chain is Large ribosomal subunit protein uL6 from Prochlorococcus marinus (strain NATL2A).